A 166-amino-acid polypeptide reads, in one-letter code: Crossover junction endodeoxyribonuclease RuvC (166 aa).

Catalysis depends on residues D12, E71, and D143. The Mg(2+) site is built by D12, E71, and D143.

This sequence belongs to the RuvC family. As to quaternary structure, homodimer which binds Holliday junction (HJ) DNA. The HJ becomes 2-fold symmetrical on binding to RuvC with unstacked arms; it has a different conformation from HJ DNA in complex with RuvA. In the full resolvosome a probable DNA-RuvA(4)-RuvB(12)-RuvC(2) complex forms which resolves the HJ. It depends on Mg(2+) as a cofactor.

Its subcellular location is the cytoplasm. It carries out the reaction Endonucleolytic cleavage at a junction such as a reciprocal single-stranded crossover between two homologous DNA duplexes (Holliday junction).. In terms of biological role, the RuvA-RuvB-RuvC complex processes Holliday junction (HJ) DNA during genetic recombination and DNA repair. Endonuclease that resolves HJ intermediates. Cleaves cruciform DNA by making single-stranded nicks across the HJ at symmetrical positions within the homologous arms, yielding a 5'-phosphate and a 3'-hydroxyl group; requires a central core of homology in the junction. The consensus cleavage sequence is 5'-(A/T)TT(C/G)-3'. Cleavage occurs on the 3'-side of the TT dinucleotide at the point of strand exchange. HJ branch migration catalyzed by RuvA-RuvB allows RuvC to scan DNA until it finds its consensus sequence, where it cleaves and resolves the cruciform DNA. The protein is Crossover junction endodeoxyribonuclease RuvC of Oleidesulfovibrio alaskensis (strain ATCC BAA-1058 / DSM 17464 / G20) (Desulfovibrio alaskensis).